We begin with the raw amino-acid sequence, 155 residues long: UPF0461 protein C5orf24 homolog (155 aa).

Residues 1–10 (MMHPVASSNP) are compositionally biased toward polar residues. The interval 1–20 (MMHPVASSNPAFCGPGKPSC) is disordered. S37 carries the post-translational modification Phosphoserine. The disordered stretch occupies residues 40–155 (SKYSHTVNHK…QQAFRCSSDA (116 aa)). Over residues 57–70 (DPLNETHLQTTSGR) the composition is skewed to polar residues. K75 is covalently cross-linked (Glycyl lysine isopeptide (Lys-Gly) (interchain with G-Cter in SUMO2)). Basic residues predominate over residues 80–92 (KKKNLNRSGKRGR). Polar residues predominate over residues 94-107 (SGTTKSAGYRTSTG). S121 bears the Phosphoserine mark.

The protein belongs to the UPF0461 family.

In Pongo abelii (Sumatran orangutan), this protein is UPF0461 protein C5orf24 homolog.